A 200-amino-acid chain; its full sequence is Snake venom metalloproteinase BmooMP-I (200 aa).

The region spanning 5–200 (RYIELAVVAD…HNPQCILNEP (196 aa)) is the Peptidase M12B domain. Residues glutamate 8 and aspartate 92 each contribute to the Ca(2+) site. 3 cysteine pairs are disulfide-bonded: cysteine 116–cysteine 195, cysteine 155–cysteine 179, and cysteine 157–cysteine 162. Histidine 141 serves as a coordination point for Zn(2+). The active site involves glutamate 142. Zn(2+) contacts are provided by histidine 145 and histidine 151. 2 residues coordinate Ca(2+): cysteine 195 and asparagine 198.

Belongs to the venom metalloproteinase (M12B) family. P-I subfamily. In terms of assembly, monomer. It depends on Zn(2+) as a cofactor. In terms of tissue distribution, expressed by the venom gland.

It is found in the secreted. Functionally, zinc metalloprotease that displays fibrinogenolytic, gelatinase and weak hemorrhagic activities. Degrades the three chain of fibrinogen Aalpha-chain (FGA), Bbeta-chain (FGB), and gamma (FGG). This Bothrops moojeni (Lance-headed viper) protein is Snake venom metalloproteinase BmooMP-I.